Consider the following 417-residue polypeptide: Phosphoglycerate kinase 2 (417 aa).

Ser2 carries the post-translational modification N-acetylserine. A phosphoserine mark is found at Ser2 and Ser4. Lys11 is subject to N6-acetyllysine. (2R)-3-phosphoglycerate is bound by residues Val23, Asp24, Phe25, Asn26, Gln38, and Arg39. N6-acetyllysine is present on Lys48. Ser62, His63, Gly65, and Arg66 together coordinate (2R)-3-phosphoglycerate. Lys75, Lys86, and Lys97 each carry N6-acetyllysine. (2R)-3-phosphoglycerate is bound by residues Leu122 and Arg123. An N6-acetyllysine mark is found at Lys131 and Lys146. The (2R)-3-phosphoglycerate site is built by His170 and Arg171. Tyr196 is modified (phosphotyrosine). Lys199 is modified (N6-acetyllysine). ADP is bound at residue Gly214. Residue Gly214 participates in CDP binding. AMP is bound by residues Ala215 and Lys216. Ala215 is an ATP binding site. Ala215 contacts Mg(2+). Mg(2+) is bound by residues Ala218 and Asp219. Position 219 (Asp219) interacts with CDP. Lys220 is a binding site for AMP. Residue Lys220 participates in ATP binding. Gly238 is an ADP binding site. Residue Gly238 participates in CDP binding. Gly239 lines the AMP pocket. Gly239 contacts ATP. N6-acetyllysine is present on residues Lys267 and Lys291. Gly313 contributes to the AMP binding site. Gly313 is an ATP binding site. Residues Gly338 and Phe343 each contribute to the CDP site. Phe343 contributes to the ADP binding site. Glu344 is a binding site for AMP. Positions 344, 375, and 376 each coordinate ATP. Asp375 contacts Mg(2+).

It belongs to the phosphoglycerate kinase family. Monomer. It depends on Mg(2+) as a cofactor. In terms of tissue distribution, mainly found in round spermatids. Localized on the principle piece in the sperm (at protein level). Testis-specific. Expression significantly decreased in the testis of elderly men.

The protein localises to the cytoplasm. It catalyses the reaction (2R)-3-phosphoglycerate + ATP = (2R)-3-phospho-glyceroyl phosphate + ADP. It functions in the pathway carbohydrate degradation; glycolysis; pyruvate from D-glyceraldehyde 3-phosphate: step 2/5. In terms of biological role, essential for sperm motility and male fertility. Not required for the completion of spermatogenesis. The polypeptide is Phosphoglycerate kinase 2 (PGK2) (Homo sapiens (Human)).